A 160-amino-acid chain; its full sequence is MSRRRRATKRVISPDSKYNSVLLARFINVIMRSGERSIAEKIVYGALSKAESRLGESAMSIFSAALNNVMPQMEVRSRRIGGVTYQVPVEVKEDRAVSLALRWIFKAAAAARKRSNKMYMDCLCNELLEAYNKRGGAYKMREEKYKMAEANKAFSHFRFN.

Belongs to the universal ribosomal protein uS7 family. In terms of assembly, part of the 30S ribosomal subunit. Contacts proteins S9 and S11.

Functionally, one of the primary rRNA binding proteins, it binds directly to 16S rRNA where it nucleates assembly of the head domain of the 30S subunit. Is located at the subunit interface close to the decoding center, probably blocks exit of the E-site tRNA. The polypeptide is Small ribosomal subunit protein uS7 (Ehrlichia chaffeensis (strain ATCC CRL-10679 / Arkansas)).